Consider the following 392-residue polypeptide: Putative RNA-binding protein Luc7-like 2 (392 aa).

Phosphoserine is present on S18. A coiled-coil region spans residues 102–177 (EVAKKRLAET…EAEEVYRNSM (76 aa)). A compositionally biased stretch (basic and acidic residues) spans 235–257 (KQEKRNQERLKRREEREREEREK). The tract at residues 235 to 392 (KQEKRNQERL…SSEEREAGEI (158 aa)) is disordered. The span at 258–321 (LRRSRSHSKN…RSRSHQRSRH (64 aa)) shows a compositional bias: basic residues. K266 and K269 each carry 5-hydroxylysine; by JMJD6. Basic and acidic residues-rich tracts occupy residues 337–364 (KERF…DRDR) and 377–392 (RSED…AGEI).

This sequence belongs to the Luc7 family. As to quaternary structure, interacts with SCNM1.

It is found in the nucleus speckle. The protein resides in the nucleus. It localises to the nucleoplasm. Its function is as follows. May bind to RNA via its Arg/Ser-rich domain. The polypeptide is Putative RNA-binding protein Luc7-like 2 (LUC7L2) (Homo sapiens (Human)).